The sequence spans 661 residues: B3 domain-containing protein Os12g0591400 (661 aa).

4 consecutive DNA-binding regions (TF-B3) follow at residues 2-95 (GDQK…FNPS), 197-290 (KTRC…FNPS), 437-535 (LYIT…FKES), and 562-658 (TNLT…IRKG).

It is found in the nucleus. The chain is B3 domain-containing protein Os12g0591400 from Oryza sativa subsp. japonica (Rice).